The sequence spans 518 residues: Probable cytochrome P450 9h1 (518 aa).

A heme-binding site is contributed by Cys-462.

It belongs to the cytochrome P450 family. It depends on heme as a cofactor.

It localises to the endoplasmic reticulum membrane. Its subcellular location is the microsome membrane. In terms of biological role, may be involved in the metabolism of insect hormones and in the breakdown of synthetic insecticides. This chain is Probable cytochrome P450 9h1 (Cyp9h1), found in Drosophila melanogaster (Fruit fly).